A 194-amino-acid polypeptide reads, in one-letter code: dTTP/UTP pyrophosphatase (194 aa).

The active-site Proton acceptor is D73.

Belongs to the Maf family. YhdE subfamily. A divalent metal cation is required as a cofactor.

Its subcellular location is the cytoplasm. The catalysed reaction is dTTP + H2O = dTMP + diphosphate + H(+). The enzyme catalyses UTP + H2O = UMP + diphosphate + H(+). Nucleoside triphosphate pyrophosphatase that hydrolyzes dTTP and UTP. May have a dual role in cell division arrest and in preventing the incorporation of modified nucleotides into cellular nucleic acids. This is dTTP/UTP pyrophosphatase from Clostridium botulinum (strain ATCC 19397 / Type A).